A 176-amino-acid chain; its full sequence is ATP synthase subunit delta (176 aa).

The protein belongs to the ATPase delta chain family. F-type ATPases have 2 components, F(1) - the catalytic core - and F(0) - the membrane proton channel. F(1) has five subunits: alpha(3), beta(3), gamma(1), delta(1), epsilon(1). F(0) has three main subunits: a(1), b(2) and c(10-14). The alpha and beta chains form an alternating ring which encloses part of the gamma chain. F(1) is attached to F(0) by a central stalk formed by the gamma and epsilon chains, while a peripheral stalk is formed by the delta and b chains.

It is found in the cell inner membrane. F(1)F(0) ATP synthase produces ATP from ADP in the presence of a proton or sodium gradient. F-type ATPases consist of two structural domains, F(1) containing the extramembraneous catalytic core and F(0) containing the membrane proton channel, linked together by a central stalk and a peripheral stalk. During catalysis, ATP synthesis in the catalytic domain of F(1) is coupled via a rotary mechanism of the central stalk subunits to proton translocation. In terms of biological role, this protein is part of the stalk that links CF(0) to CF(1). It either transmits conformational changes from CF(0) to CF(1) or is implicated in proton conduction. The chain is ATP synthase subunit delta from Nitratiruptor sp. (strain SB155-2).